A 313-amino-acid chain; its full sequence is Ribosomal protein uL3 glutamine methyltransferase (313 aa).

This sequence belongs to the protein N5-glutamine methyltransferase family. PrmB subfamily.

It carries out the reaction L-glutaminyl-[ribosomal protein uL3] + S-adenosyl-L-methionine = N(5)-methyl-L-glutaminyl-[ribosomal protein uL3] + S-adenosyl-L-homocysteine + H(+). Its function is as follows. Methylates large ribosomal subunit protein uL3 on a specific glutamine residue. The polypeptide is Ribosomal protein uL3 glutamine methyltransferase (Pasteurella multocida (strain Pm70)).